Consider the following 358-residue polypeptide: Probable arabinan endo-1,5-alpha-L-arabinosidase B (358 aa).

A signal peptide spans 1-16 (MVLVATLFSLFTVSLC). Aspartate 39 (proton acceptor) is an active-site residue. N-linked (GlcNAc...) asparagine glycosylation is present at asparagine 194. The segment at 202-227 (HLAKHPKTERVNSQDQNPDPLCRDSS) is disordered. Glutamate 233 functions as the Proton donor in the catalytic mechanism.

The protein belongs to the glycosyl hydrolase 43 family.

It localises to the secreted. It catalyses the reaction Endohydrolysis of (1-&gt;5)-alpha-arabinofuranosidic linkages in (1-&gt;5)-arabinans.. The protein operates within glycan metabolism; L-arabinan degradation. Endo-1,5-alpha-L-arabinanase involved in degradation of pectin. Its preferred substrate is linear 1,5-alpha-L-arabinan. This is Probable arabinan endo-1,5-alpha-L-arabinosidase B (abnB) from Aspergillus flavus (strain ATCC 200026 / FGSC A1120 / IAM 13836 / NRRL 3357 / JCM 12722 / SRRC 167).